The primary structure comprises 34 residues: Photosystem II reaction center protein M (34 aa).

A helical membrane pass occupies residues 5–25 (ILAFIATALFISIPTAFLLIP).

It belongs to the PsbM family. In terms of assembly, PSII is composed of 1 copy each of membrane proteins PsbA, PsbB, PsbC, PsbD, PsbE, PsbF, PsbH, PsbI, PsbJ, PsbK, PsbL, PsbM, PsbT, PsbX, PsbY, PsbZ, Psb30/Ycf12, at least 3 peripheral proteins of the oxygen-evolving complex and a large number of cofactors. It forms dimeric complexes.

The protein resides in the plastid. It localises to the chloroplast thylakoid membrane. In terms of biological role, one of the components of the core complex of photosystem II (PSII). PSII is a light-driven water:plastoquinone oxidoreductase that uses light energy to abstract electrons from H(2)O, generating O(2) and a proton gradient subsequently used for ATP formation. It consists of a core antenna complex that captures photons, and an electron transfer chain that converts photonic excitation into a charge separation. This subunit is found at the monomer-monomer interface. The protein is Photosystem II reaction center protein M of Psilotum nudum (Whisk fern).